A 95-amino-acid polypeptide reads, in one-letter code: Cell division topological specificity factor (95 aa).

The protein belongs to the MinE family.

Prevents the cell division inhibition by proteins MinC and MinD at internal division sites while permitting inhibition at polar sites. This ensures cell division at the proper site by restricting the formation of a division septum at the midpoint of the long axis of the cell. In Methylorubrum extorquens (strain CM4 / NCIMB 13688) (Methylobacterium extorquens), this protein is Cell division topological specificity factor.